The chain runs to 705 residues: Translation initiation factor IF-2 (705 aa).

The tract at residues 40-124 (DDQIKALDKK…QPAAPKEIPS (85 aa)) is disordered. The segment covering 41–58 (DQIKALDKKFKKEQKNDN) has biased composition (basic and acidic residues). Positions 59 to 77 (KQSTQNNHQKSNNQNQNKG) are enriched in low complexity. Positions 94–108 (KGNKKNNRNNKKNNK) are enriched in basic residues. Residues 207 to 376 (ERPAVVTIMG…GLVAEVQELK (170 aa)) form the tr-type G domain. A G1 region spans residues 216-223 (GHVDHGKT). 216–223 (GHVDHGKT) contacts GTP. Residues 241–245 (GITQH) are G2. The segment at 262–265 (DTPG) is G3. GTP contacts are provided by residues 262 to 266 (DTPGH) and 316 to 319 (NKID). Residues 316 to 319 (NKID) form a G4 region. A G5 region spans residues 352 to 354 (SAL).

Belongs to the TRAFAC class translation factor GTPase superfamily. Classic translation factor GTPase family. IF-2 subfamily.

Its subcellular location is the cytoplasm. In terms of biological role, one of the essential components for the initiation of protein synthesis. Protects formylmethionyl-tRNA from spontaneous hydrolysis and promotes its binding to the 30S ribosomal subunits. Also involved in the hydrolysis of GTP during the formation of the 70S ribosomal complex. This chain is Translation initiation factor IF-2, found in Staphylococcus aureus (strain MSSA476).